A 156-amino-acid polypeptide reads, in one-letter code: SsrA-binding protein (156 aa).

Belongs to the SmpB family.

Its subcellular location is the cytoplasm. Required for rescue of stalled ribosomes mediated by trans-translation. Binds to transfer-messenger RNA (tmRNA), required for stable association of tmRNA with ribosomes. tmRNA and SmpB together mimic tRNA shape, replacing the anticodon stem-loop with SmpB. tmRNA is encoded by the ssrA gene; the 2 termini fold to resemble tRNA(Ala) and it encodes a 'tag peptide', a short internal open reading frame. During trans-translation Ala-aminoacylated tmRNA acts like a tRNA, entering the A-site of stalled ribosomes, displacing the stalled mRNA. The ribosome then switches to translate the ORF on the tmRNA; the nascent peptide is terminated with the 'tag peptide' encoded by the tmRNA and targeted for degradation. The ribosome is freed to recommence translation, which seems to be the essential function of trans-translation. The chain is SsrA-binding protein from Staphylococcus haemolyticus (strain JCSC1435).